Consider the following 434-residue polypeptide: Alpha-enolase (434 aa).

Serine 2 is subject to N-acetylserine. Lysine 5 is subject to N6-acetyllysine. Serine 40 contacts Mg(2+). Tyrosine 44 carries the phosphotyrosine modification. The residue at position 60 (lysine 60) is an N6-acetyllysine; alternate. Lysine 60 is subject to N6-succinyllysine; alternate. N6-acetyllysine is present on residues lysine 64 and lysine 71. An N6-acetyllysine; alternate modification is found at lysine 89. An N6-succinyllysine; alternate modification is found at lysine 89. Residue lysine 126 is modified to N6-acetyllysine. Substrate is bound by residues histidine 158 and glutamate 167. N6-acetyllysine is present on residues lysine 193 and lysine 199. Lysine 202 is subject to N6-acetyllysine; alternate. Lysine 202 participates in a covalent cross-link: Glycyl lysine isopeptide (Lys-Gly) (interchain with G-Cter in SUMO2); alternate. Glutamate 210 functions as the Proton donor in the catalytic mechanism. N6-acetyllysine; alternate occurs at positions 228 and 233. Lysine 228 carries the post-translational modification N6-succinyllysine; alternate. Lysine 228 is modified (N6-(2-hydroxyisobutyryl)lysine; alternate). Residue lysine 233 is modified to N6-malonyllysine; alternate. Aspartate 245 serves as a coordination point for Mg(2+). Lysine 256 carries the post-translational modification N6-acetyllysine. Position 263 is a phosphoserine (serine 263). Lysine 281 carries the post-translational modification N6-acetyllysine; alternate. At lysine 281 the chain carries N6-(2-hydroxyisobutyryl)lysine; alternate. At lysine 285 the chain carries N6-acetyllysine. Position 287 is a phosphotyrosine (tyrosine 287). Serine 291 is subject to Phosphoserine. The Mg(2+) site is built by glutamate 293 and aspartate 318. 2 residues coordinate substrate: glutamate 293 and aspartate 318. An N6-acetyllysine mark is found at lysine 335 and lysine 343. The active-site Proton acceptor is the lysine 343. Substrate-binding positions include 370-373 (SHRS) and lysine 394. The segment at 405–434 (AKYNQILRIEEELGSKAKFAGRSFRNPLAK) is required for interaction with PLG. Lysine 406 bears the N6-acetyllysine mark. Lysine 420 is modified (N6-acetyllysine; alternate). Lysine 420 is subject to N6-succinyllysine; alternate. At lysine 420 the chain carries N6-malonyllysine; alternate.

Belongs to the enolase family. In terms of assembly, mammalian enolase is composed of 3 isozyme subunits, alpha, beta and gamma, which can form homodimers or heterodimers which are cell-type and development-specific. ENO1 interacts with PLG in the neuronal plasma membrane and promotes its activation. The C-terminal lysine is required for this binding. Interacts with ENO4 and PGAM2. Interacts with CMTM6. Mg(2+) is required as a cofactor. ISGylated. In terms of processing, lysine 2-hydroxyisobutyrylation (Khib) by p300/EP300 activates the phosphopyruvate hydratase activity. As to expression, expressed in flagella of epididymal sperm. The alpha/alpha homodimer is expressed in embryo and in most adult tissues. The alpha/beta heterodimer and the beta/beta homodimer are found in striated muscle, and the alpha/gamma heterodimer and the gamma/gamma homodimer in neurons.

It is found in the cytoplasm. The protein resides in the cell membrane. It catalyses the reaction (2R)-2-phosphoglycerate = phosphoenolpyruvate + H2O. It participates in carbohydrate degradation; glycolysis; pyruvate from D-glyceraldehyde 3-phosphate: step 4/5. Its function is as follows. Glycolytic enzyme that catalyzes the conversion of 2-phosphoglycerate to phosphoenolpyruvate. In addition to glycolysis, involved in various processes such as growth control, hypoxia tolerance and allergic responses. May also function in the intravascular and pericellular fibrinolytic system due to its ability to serve as a receptor and activator of plasminogen on the cell surface of several cell-types such as leukocytes and neurons. Stimulates immunoglobulin production. The protein is Alpha-enolase (Eno1) of Rattus norvegicus (Rat).